The primary structure comprises 405 residues: K(+)/H(+) antiporter subunit KhtU (405 aa).

12 helical membrane passes run 3-23 (HLVFEVGTALVLVAIASVIAN), 29-49 (IIPFLIVLGMLVGPHAPKMGI), 60-80 (IIEFFGRMGVLFLLFYLGLEF), 85-105 (LIKSGKSIAVGGTIYILINFS), 108-128 (LLYGFITGFSFLEVLILAGVI), 153-173 (LILGIIMFEDIFLAVYLSVVS), 183-203 (VGSALLSILIAFGYMLLFFIA), 222-242 (VFIIVIFAALFFIAGFSETIH), 268-288 (LVVPFRDFFGAMFFFSFGLSI), 297-317 (VWLALGAVILTILGNFIAGMV), 332-352 (IGLTIVSRGEFSIIVANLGIA), and 357-377 (ATLKPFAALYVLILAILGPLV).

It belongs to the monovalent cation:proton antiporter 2 (CPA2) transporter (TC 2.A.37) family. The transporter is composed of the integral membrane protein KhtU and the regulatory protein KhtT.

Its subcellular location is the cell membrane. With respect to regulation, potassium antiport activity requires the presence of KhtT. Activity is also modulated by KhtS. Has higher activity at alkaline pH. In terms of biological role, potassium/proton antiporter that mediates the efflux of potassium ions from the cell. Can also mediate rubidium/proton antiport, but has no permeability for sodium or lithium ions. In the absence of KhtT, does not have antiport activity, but can catalyze potassium efflux. Involved in protection of the cell from methylglyoxal, a toxic by-product of glycolysis, via activation by S-lactoyl-BSH of the antiporter activity, leading to cytoplasmic acidification and methylglyoxal resistance. In Bacillus subtilis (strain 168), this protein is K(+)/H(+) antiporter subunit KhtU.